Here is a 434-residue protein sequence, read N- to C-terminus: Probable zinc metalloprotease PTRG_04772 (434 aa).

N-linked (GlcNAc...) asparagine glycosylation is present at Asn88. His111, Asp131, and Glu164 together coordinate Zn(2+). A glycan (N-linked (GlcNAc...) asparagine) is linked at Asn179. Position 191 (Asp191) interacts with Zn(2+). N-linked (GlcNAc...) asparagine glycosylation is found at Asn220, Asn299, Asn347, Asn353, Asn390, and Asn395. The region spanning 340–433 is the Fibronectin type-III domain; it reads SPTNVGINTT…LPFPFGCARN (94 aa).

It belongs to the peptidase M28 family. M28B subfamily. Requires Zn(2+) as cofactor.

The protein localises to the secreted. In Pyrenophora tritici-repentis (strain Pt-1C-BFP) (Wheat tan spot fungus), this protein is Probable zinc metalloprotease PTRG_04772.